A 558-amino-acid chain; its full sequence is MPAKKTMAQRLGQALETMTRQCGQLPETPAYGSWLLGRVSESPSRRWVRIKRIVTVYIMTANLTGIVVALLVVTFAFPVPSIYTDAPWWVTFGVAPAYATLALAIGTYWITTRIVRASIRWAIEERAPSQADGRNTLLLPFRVAAVHLILWDIGGALLATLYGLANRVFVTIILFSVTICGVLVATNCYLFTEFALRPVAAKALEAGRPPRRFAPGIMGRTMTVWSLGSGVPVTGIATTALYVLLVHNLTETQLASAVLILSITTLIFGFLVMWILAWLTAAPVRVVRAALKRVEQGDLRGDLVVFDGTELGELQRGFNAMVNGLRERERVRDLFGRHVGREVAAAAERERPQLGGEDRHAAVVFVDIVGSTQLVDNQPAAHVVKLLNRFFAIVVNEVDRHHGLINKFAGDAALAIFGAPNRLDRPEDAALAAARAIADRLANEMPEVQAGIGVAAGQIVAGNVGAKQRFEYTVVGKPVNQAARLCELAKSHPARLLASSDTLHAASETERAHWSLGETVTLRGYHQPTQLASPHRRPPGSIHLTAEHAEEIRTDRLG.

The next 6 helical transmembrane spans lie at 63–83 (LTGIVVALLVVTFAFPVPSIY), 90–110 (VTFGVAPAYATLALAIGTYWI), 143–163 (VAAVHLILWDIGGALLATLYG), 168–188 (VFVTIILFSVTICGVLVATNC), 226–246 (SLGSGVPVTGIATTALYVLLV), and 258–278 (VLILSITTLIFGFLVMWILAW). One can recognise an HAMP domain in the interval 279–330 (LTAAPVRVVRAALKRVEQGDLRGDLVVFDGTELGELQRGFNAMVNGLRERER). In terms of domain architecture, Guanylate cyclase spans 362–486 (AVVFVDIVGS…KPVNQAARLC (125 aa)). Residues 529-558 (TQLASPHRRPPGSIHLTAEHAEEIRTDRLG) form a disordered region. Residues 545–558 (TAEHAEEIRTDRLG) are compositionally biased toward basic and acidic residues.

This sequence belongs to the adenylyl cyclase class-3 family.

It is found in the cell membrane. This is an uncharacterized protein from Mycobacterium tuberculosis (strain CDC 1551 / Oshkosh).